A 397-amino-acid chain; its full sequence is Gastric triacylglycerol lipase (397 aa).

The first 19 residues, 1 to 19 (MWWLLVTVCFIHMSGNAFC), serve as a signal peptide directing secretion. The N-linked (GlcNAc...) asparagine glycan is linked to N33. The AB hydrolase-1 domain maps to 77–376 (PVVFLQHGLL…PNYNHLDFIW (300 aa)). S171 acts as the Nucleophile in catalysis. A disulfide bridge connects residues C245 and C254. Residues N270 and N326 are each glycosylated (N-linked (GlcNAc...) asparagine). Catalysis depends on charge relay system residues D342 and H371.

This sequence belongs to the AB hydrolase superfamily. Lipase family.

The protein resides in the secreted. It carries out the reaction a triacylglycerol + H2O = a diacylglycerol + a fatty acid + H(+). The enzyme catalyses 1,2,3-tri-(9Z-octadecenoyl)-glycerol + H2O = 1,2-di-(9Z-octadecenoyl)-sn-glycerol + (9Z)-octadecenoate + H(+). It catalyses the reaction 1,2,3-trioctanoylglycerol + H2O = 1,2-dioctanoyl-sn-glycerol + octanoate + H(+). Inhibited by diethylp-nitrophenyl phosphate but not inhibited by thiol reagents 5,5'-dithiobis(2-nitrobenzoic acid) or 4,4'-dithiopyridine. Functionally, catalyzes the hydrolysis of triacylglycerols to yield free fatty acids, diacylglycerol, monoacylglycerol, and glycerol. Shows a preferential hydrolysis at the sn-3 position of triacylglycerol. This chain is Gastric triacylglycerol lipase (LIPF), found in Bos taurus (Bovine).